Here is a 104-residue protein sequence, read N- to C-terminus: L-rhamnose mutarotase (104 aa).

Tyr18 is a binding site for substrate. His22 serves as the catalytic Proton donor. Substrate-binding positions include Tyr41 and 76–77 (WW).

Belongs to the rhamnose mutarotase family. As to quaternary structure, homodimer.

The protein localises to the cytoplasm. The enzyme catalyses alpha-L-rhamnose = beta-L-rhamnose. It functions in the pathway carbohydrate metabolism; L-rhamnose metabolism. Its function is as follows. Involved in the anomeric conversion of L-rhamnose. This is L-rhamnose mutarotase from Rhizobium meliloti (strain 1021) (Ensifer meliloti).